The sequence spans 147 residues: Allograft inflammatory factor 1 (147 aa).

N-acetylserine is present on Ser-2. Lys-11 is modified (N6-acetyllysine). The residue at position 39 (Ser-39) is a Phosphoserine. The EF-hand 1 domain maps to 45–80 (SKLEAFKTKYMEFDLNGNGDIDIMSLKRMLEKLGVP). Positions 58, 60, 62, 64, 98, 100, and 105 each coordinate Ca(2+). One can recognise an EF-hand 2; degenerate domain in the interval 81–115 (KTHLELKKLIREVSSGSEETFSYSDFLRMMLGKRS). The disordered stretch occupies residues 127–147 (KNKEHQKPTGPPAKKAISELP).

As to quaternary structure, homodimer (Potential). Monomer. Interacts with LCP1. Cardiac allograft, spleen and testis. Expressed by inflammatory cells (macrophages and neutrophils).

Its subcellular location is the cytoplasm. It localises to the cytoskeleton. It is found in the cell projection. The protein resides in the ruffle membrane. The protein localises to the phagocytic cup. Its function is as follows. Actin-binding protein that enhances membrane ruffling and RAC activation. Enhances the actin-bundling activity of LCP1. Binds calcium. Plays a role in RAC signaling and in phagocytosis. May play an role in macrophage activation and function. Promotes the proliferation of vascular smooth muscle cells and of T-lymphocytes. Enhances lymphocyte migration. Plays a role in vascular inflammation. The chain is Allograft inflammatory factor 1 (Aif1) from Rattus norvegicus (Rat).